Here is a 285-residue protein sequence, read N- to C-terminus: Elongation factor Ts (285 aa).

Positions 84–87 (TDFV) are involved in Mg(2+) ion dislocation from EF-Tu.

Belongs to the EF-Ts family.

Its subcellular location is the cytoplasm. Its function is as follows. Associates with the EF-Tu.GDP complex and induces the exchange of GDP to GTP. It remains bound to the aminoacyl-tRNA.EF-Tu.GTP complex up to the GTP hydrolysis stage on the ribosome. In Bifidobacterium animalis subsp. lactis (strain AD011), this protein is Elongation factor Ts.